We begin with the raw amino-acid sequence, 184 residues long: Large ribosomal subunit protein bL9 (184 aa).

Residues 160–184 (LQNQKSEQQEAEQDANKEAADGDDS) form a disordered region. Over residues 173–184 (DANKEAADGDDS) the composition is skewed to basic and acidic residues.

This sequence belongs to the bacterial ribosomal protein bL9 family.

Functionally, binds to the 23S rRNA. In Wolbachia sp. subsp. Drosophila simulans (strain wRi), this protein is Large ribosomal subunit protein bL9.